A 494-amino-acid chain; its full sequence is Potassium voltage-gated channel subfamily A member 2 (494 aa).

The segment at 1-25 is disordered; that stretch reads MTVATGDPSDEAAAHPGNPAEYDPD. The segment at 1–124 is tetramerization domain; that stretch reads MTVATGDPSD…YELGDEAIEL (124 aa). The Cytoplasmic segment spans residues 1–159; it reads MTVATGDPSD…LLFEYPESSG (159 aa). Residues 160–181 form a helical membrane-spanning segment; sequence PARIIAIISVMVILISIVSFCL. Topologically, residues 182–216 are extracellular; the sequence is ETLPIFRNDDDEPHSVFDTNTNTTIYFTSTYFTDP. Asn-203 is a glycosylation site (N-linked (GlcNAc...) asparagine). The helical transmembrane segment at 217–238 threads the bilayer; that stretch reads FFILETLCIIWFSFEFLVRLFA. Cys-239 is lipidated: S-palmitoyl cysteine. Residues 239-249 lie on the Cytoplasmic side of the membrane; that stretch reads CPSKSGFFGNV. A helical transmembrane segment spans residues 250–270; the sequence is MNIIDVVAIIPYFITLATELA. Over 271–284 the chain is Extracellular; that stretch reads EKPEDGQAGQQAMS. A helical; Voltage-sensor membrane pass occupies residues 285-305; it reads LAILRVIRLVRVFRIFKLSRH. Residues 306–320 are Cytoplasmic-facing; sequence SKGLQILGQTLKASM. Residues 307–320 are S4-S5 linker; the sequence is KGLQILGQTLKASM. A helical transmembrane segment spans residues 321–342; that stretch reads RELGLLIFFLFIGVILFSSAVY. Residues 343–356 lie on the Extracellular side of the membrane; sequence FAEADEPESQFESI. The segment at residues 357-368 is an intramembrane region (helical); sequence PDAFWWAVVSMT. The short motif at 369-374 is the Selectivity filter element; the sequence is TVGYGD. Residues 369 to 376 lie within the membrane without spanning it; sequence TVGYGDMV. Residues 377-383 lie on the Extracellular side of the membrane; sequence PTTIGGK. A helical membrane pass occupies residues 384-412; it reads IVGSLCAIAGVLTIALPVPVIVSNFNYFY. The Cytoplasmic portion of the chain corresponds to 413 to 494; that stretch reads HRETEGEEQA…VNITKMLTDV (82 aa). The PDZ-binding signature appears at 492–494; the sequence is TDV.

This sequence belongs to the potassium channel family. A (Shaker) (TC 1.A.1.2) subfamily. Kv1.2/KCNA2 sub-subfamily. In terms of assembly, homotetramer and heterotetramer with other family members. In terms of tissue distribution, expressed in oligodendrocytes.

Its subcellular location is the cell membrane. The catalysed reaction is K(+)(in) = K(+)(out). In terms of biological role, voltage-gated potassium channel that mediates transmembrane potassium transport in excitable membranes, primarily in the brain and central nervous system. Prevents aberrant action potential firing and regulates neuronal output. Forms tetrameric potassium-selective channels through which potassium ions pass in accordance with their electrochemical gradient. The channel alternates between opened and closed conformations in response to the voltage difference across the membrane. Can form functional homotetrameric channels and heterotetrameric channels with other family members; the channels characteristics depend critically on the types of channel-forming alpha subunits that are present. Channel properties are modulated by cytoplasmic beta subunits that regulate the subcellular location of the alpha subunits. In vivo, membranes probably contain a mixture of heteromeric potassium channel complexes, making it difficult to assign currents observed in intact tissues to any particular potassium channel family member. Homotetrameric KCNA2 forms a delayed-rectifier potassium channel that opens in response to membrane depolarization, followed by slow spontaneous channel closure. Regulates neuronal excitability and plays a role as pacemaker in the regulation of neuronal action potentials. KCNA2-containing channels play a presynaptic role and prevent hyperexcitability and aberrant action potential firing. Response to toxins that are selective for KCNA2-containing potassium channels suggests that in Purkinje cells, dendritic subthreshold KCNA2-containing potassium channels prevent random spontaneous calcium spikes, suppressing dendritic hyperexcitability without hindering the generation of somatic action potentials, and thereby play an important role in motor coordination. Plays a role in the induction of long-term potentiation of neuron excitability in the CA3 layer of the hippocampus. The sequence is that of Potassium voltage-gated channel subfamily A member 2 (kcna2) from Oncorhynchus mykiss (Rainbow trout).